Here is a 298-residue protein sequence, read N- to C-terminus: GTP cyclohydrolase FolE2 (298 aa).

The protein belongs to the GTP cyclohydrolase IV family.

The catalysed reaction is GTP + H2O = 7,8-dihydroneopterin 3'-triphosphate + formate + H(+). Its pathway is cofactor biosynthesis; 7,8-dihydroneopterin triphosphate biosynthesis; 7,8-dihydroneopterin triphosphate from GTP: step 1/1. In terms of biological role, converts GTP to 7,8-dihydroneopterin triphosphate. The protein is GTP cyclohydrolase FolE2 of Pseudomonas fluorescens (strain Pf0-1).